Reading from the N-terminus, the 782-residue chain is Cadherin-5 (782 aa).

The N-terminal stretch at 1–22 (MQVLVMLLAAAGTYLGLLTAPT) is a signal peptide. A propeptide spanning residues 23–44 (AASNPGRQDTPSTLPLHRRQKR) is cleaved from the precursor. Cadherin domains lie at 45–148 (DWIW…WPVF), 149–255 (TQLV…FPVF), 256–370 (TQTR…PPNF), 371–475 (KQPF…DNAP), and 476–592 (EFAK…MGAQ). Residues 45–598 (DWIWNQMHID…MGAQVGVSIQ (554 aa)) are Extracellular-facing. Ca(2+) is bound by residues Glu55 and Glu56. Asn58 is a glycosylation site (N-linked (GlcNAc...) asparagine). Ca(2+) contacts are provided by Asp106, Glu108, Asp140, Ile141, Asn142, Asp143, and Asn144. Residue Asn154 is glycosylated (N-linked (GlcNAc...) asparagine). Ca(2+)-binding residues include Asp174, Asp176, His183, and Asp228. 4 N-linked (GlcNAc...) asparagine glycosylation sites follow: Asn360, Asn440, Asn522, and Asn534. The helical transmembrane segment at 599-619 (ALVAIFLCILTIAVISLLVYL) threads the bilayer. Residues 620–659 (RRRLRKQARAHGKSVPEIHEQLVTYDEEGGGEMDTTSYDV) form a required for interaction with PALS1 region. The Cytoplasmic segment spans residues 620–782 (RRRLRKQARA…GSDPREELLY (163 aa)).

As to quaternary structure, part of a complex composed of AMOTL2, MAGI1 and CDH5, within the complex AMOTL2 acts as a scaffold protein for the interaction of MAGI1 with CDH5. The complex is required for coupling actin fibers to cell junctions in endothelial cells. Within the complex AMOTL2 (via its N-terminus) interacts with CDH5. Interacts (via cadherin 5 domain) with PTPRB. Interacts with TRPC4. Interacts with KRIT1. Interacts with PARD3. Interacts with RTN4 (isoform B). Interacts with PALS1; the interaction promotes PALS1 localization to cell junctions and is required for CDH5-mediated vascular lumen formation and endothelial cell. Interacts with CTNND1/p120-catenin; the interaction controls CADH5 endocytosis. Post-translationally, phosphorylated on tyrosine residues by KDR/VEGFR-2. Dephosphorylated by PTPRB. O-glycosylated.

The protein resides in the cell junction. The protein localises to the adherens junction. It is found in the cell membrane. Its subcellular location is the cytoplasm. Its function is as follows. Cadherins are calcium-dependent cell adhesion proteins. They preferentially interact with themselves in a homophilic manner in connecting cells; cadherins may thus contribute to the sorting of heterogeneous cell types. This cadherin may play a important role in endothelial cell biology through control of the cohesion and organization of the intercellular junctions. It associates with alpha-catenin forming a link to the cytoskeleton. Plays a role in coupling actin fibers to cell junctions in endothelial cells, via acting as a cell junctional complex anchor for AMOTL2 and MAGI1. Acts in concert with KRIT1 and PALS1 to establish and maintain correct endothelial cell polarity and vascular lumen. These effects are mediated by recruitment and activation of the Par polarity complex and RAP1B. Required for activation of PRKCZ and for localization of phosphorylated PRKCZ, PARD3, TIAM1 and RAP1B to the cell junction. Associates with CTNND1/p120-catenin to control CADH5 endocytosis. The chain is Cadherin-5 from Sus scrofa (Pig).